We begin with the raw amino-acid sequence, 251 residues long: Hydroxyacylglutathione hydrolase (251 aa).

Residues His-55, His-57, Asp-59, His-60, His-112, Asp-131, and His-169 each contribute to the Zn(2+) site.

The protein belongs to the metallo-beta-lactamase superfamily. Glyoxalase II family. In terms of assembly, monomer. Zn(2+) serves as cofactor.

The catalysed reaction is an S-(2-hydroxyacyl)glutathione + H2O = a 2-hydroxy carboxylate + glutathione + H(+). Its pathway is secondary metabolite metabolism; methylglyoxal degradation; (R)-lactate from methylglyoxal: step 2/2. Its function is as follows. Thiolesterase that catalyzes the hydrolysis of S-D-lactoyl-glutathione to form glutathione and D-lactic acid. The polypeptide is Hydroxyacylglutathione hydrolase (Erythrobacter litoralis (strain HTCC2594)).